We begin with the raw amino-acid sequence, 310 residues long: p-hydroxybenzoic acid efflux pump subunit AaeA (310 aa).

Residues 12-32 (AITLVLVILAFIAIFRAWVYY) form a helical membrane-spanning segment.

It belongs to the membrane fusion protein (MFP) (TC 8.A.1) family.

It is found in the cell inner membrane. Its function is as follows. Forms an efflux pump with AaeB. The protein is p-hydroxybenzoic acid efflux pump subunit AaeA of Salmonella gallinarum (strain 287/91 / NCTC 13346).